A 715-amino-acid polypeptide reads, in one-letter code: Nucleolar complex protein 2 homolog (715 aa).

Disordered stretches follow at residues 17–71, 85–132, and 638–715; these read SKRI…HKLD, FLQQ…DKTK, and ERSA…SDED. Residues 89–128 show a composition bias toward acidic residues; sequence EDADLLNMEDDGDDDEDDDEDDEDEEEEESDDDEDDEEDD. The segment covering 638–660 has biased composition (basic and acidic residues); sequence ERSAVENSKKDDKKKKKEEEAAA.

Belongs to the NOC2 family.

The protein resides in the nucleus. Required for normal somatic gonad development and for regulation of germline development and proliferation. The polypeptide is Nucleolar complex protein 2 homolog (pro-2) (Caenorhabditis elegans).